Here is a 288-residue protein sequence, read N- to C-terminus: Glycine--tRNA ligase alpha subunit (288 aa).

This sequence belongs to the class-II aminoacyl-tRNA synthetase family. As to quaternary structure, tetramer of two alpha and two beta subunits.

The protein resides in the cytoplasm. It carries out the reaction tRNA(Gly) + glycine + ATP = glycyl-tRNA(Gly) + AMP + diphosphate. The chain is Glycine--tRNA ligase alpha subunit from Desulfatibacillum aliphaticivorans.